A 748-amino-acid chain; its full sequence is Probable transcriptional regulator SLK1 (748 aa).

Disordered regions lie at residues 67–93 and 138–163; these read QHLP…RENN and QQRL…QQQQ. The segment covering 71–81 has biased composition (low complexity); the sequence is QQQQQQLLQQQ. The dimerization stretch occupies residues 204–451; it reads PAENCITYWR…EQKIGPIEGL (248 aa). A Nuclear localization signal motif is present at residues 213–227; that stretch reads RKFVAEYFSPRAKQR. The segment covering 572–587 has biased composition (polar residues); the sequence is NAMNNPNSNTGKQEGF. Disordered regions lie at residues 572-653 and 667-712; these read NAMN…GNTP and ENGG…NNSF. Low complexity predominate over residues 588–606; the sequence is SSQNPTPNSNQSPSSSSQQ. The span at 615-653 shows a compositional bias: polar residues; it reads FPNSPQMQQQQRTMNGPTNILPQNHPHQLQSPHSHGNTP. Positions 667 to 686 are enriched in low complexity; that stretch reads ENGGSVQQQQAFSGQSGSNS. Residues 687–699 are compositionally biased toward polar residues; that stretch reads NAERNTTASTSNI.

Belongs to the adn1/SEU family. Forms corepressor complexes with LUH; LUH is the transcription repressor subunit and SLK1 the specific DNA-binding adapters. As to expression, expressed in young flower meristems, ovules and the carpel margin meristem.

The protein resides in the nucleus. In terms of biological role, probable transcription regulator that functions in the development of the carpel margin meristem similarly to SEUSS (SEU). In association with SEU, supports organ development from meristematic regions by facilitating auxin response and thus organ initiation, and by sustaining meristematic potential through the maintenance of PHABULOSA expression. DNA-binding adapter subunit of the SEU-SLK1 transcriptional corepressor of abiotic stress (e.g. salt and osmotic stress) response genes. This chain is Probable transcriptional regulator SLK1 (SLK1), found in Arabidopsis thaliana (Mouse-ear cress).